The chain runs to 872 residues: Alanine--tRNA ligase (872 aa).

Zn(2+) contacts are provided by His-567, His-571, Cys-669, and His-673.

This sequence belongs to the class-II aminoacyl-tRNA synthetase family. Zn(2+) serves as cofactor.

Its subcellular location is the cytoplasm. It carries out the reaction tRNA(Ala) + L-alanine + ATP = L-alanyl-tRNA(Ala) + AMP + diphosphate. Its function is as follows. Catalyzes the attachment of alanine to tRNA(Ala) in a two-step reaction: alanine is first activated by ATP to form Ala-AMP and then transferred to the acceptor end of tRNA(Ala). Also edits incorrectly charged Ser-tRNA(Ala) and Gly-tRNA(Ala) via its editing domain. The chain is Alanine--tRNA ligase from Streptococcus pyogenes serotype M28 (strain MGAS6180).